Reading from the N-terminus, the 462-residue chain is Fumarate hydratase class II (462 aa).

Substrate-binding positions include 97–99 (SGT), 127–130 (HPND), 137–139 (SSN), and threonine 185. The active-site Proton donor/acceptor is the histidine 186. Serine 316 is a catalytic residue. Substrate contacts are provided by residues serine 317 and 322–324 (KVN).

Belongs to the class-II fumarase/aspartase family. Fumarase subfamily. In terms of assembly, homotetramer.

Its subcellular location is the cytoplasm. It carries out the reaction (S)-malate = fumarate + H2O. It functions in the pathway carbohydrate metabolism; tricarboxylic acid cycle; (S)-malate from fumarate: step 1/1. Functionally, involved in the TCA cycle. Catalyzes the stereospecific interconversion of fumarate to L-malate. This chain is Fumarate hydratase class II, found in Bacillus anthracis.